Reading from the N-terminus, the 156-residue chain is Peptide deformylase 1 (156 aa).

Residues Cys90 and His132 each contribute to the Fe cation site. Glu133 is an active-site residue. His136 contacts Fe cation.

The protein belongs to the polypeptide deformylase family. Fe(2+) is required as a cofactor.

It carries out the reaction N-terminal N-formyl-L-methionyl-[peptide] + H2O = N-terminal L-methionyl-[peptide] + formate. In terms of biological role, removes the formyl group from the N-terminal Met of newly synthesized proteins. Requires at least a dipeptide for an efficient rate of reaction. N-terminal L-methionine is a prerequisite for activity but the enzyme has broad specificity at other positions. The protein is Peptide deformylase 1 of Bacillus anthracis.